A 90-amino-acid chain; its full sequence is Albumin (90 aa).

Ser-5 carries the phosphoserine modification. Residues Glu-6 and Asp-13 each coordinate Ca(2+). One can recognise an Albumin domain in the interval 25 to 90 (LLRHLVDEPQ…LVASTQAALA (66 aa)). Ser-61 carries the phosphoserine modification. A phosphothreonine mark is found at Thr-62 and Thr-64. Residue Lys-80 is modified to N6-methyllysine.

This sequence belongs to the ALB/AFP/VDB family. In terms of assembly, interacts with FCGRT; this interaction regulates ALB homeostasis. Interacts with TASOR. In plasma, occurs in a covalently-linked complex with chromophore-bound alpha-1-microglobulin; this interaction does not prevent fatty acid binding to ALB. In terms of tissue distribution, plasma.

The protein localises to the secreted. Functionally, binds water, Ca(2+), Na(+), K(+), fatty acids, hormones, bilirubin and drugs. Its main function is the regulation of the colloidal osmotic pressure of blood. Major zinc transporter in plasma, typically binds about 80% of all plasma zinc. Major calcium and magnesium transporter in plasma, binds approximately 45% of circulating calcium and magnesium in plasma. Potentially has more than two calcium-binding sites and might additionally bind calcium in a non-specific manner. The shared binding site between zinc and calcium suggests a crosstalk between zinc and calcium transport in the blood. The rank order of affinity is zinc &gt; calcium &gt; magnesium. Binds to the bacterial siderophore enterobactin and inhibits enterobactin-mediated iron uptake of E.coli from ferric transferrin, and may thereby limit the utilization of iron and growth of enteric bacteria such as E.coli. Does not prevent iron uptake by the bacterial siderophore aerobactin. This chain is Albumin, found in Capra hircus (Goat).